We begin with the raw amino-acid sequence, 334 residues long: Tryptophan--tRNA ligase (334 aa).

ATP is bound by residues 11–13 and 19–20; these read QPS and GN. Residues 12–20 carry the 'HIGH' region motif; that stretch reads PSGELTIGN. Asp-135 serves as a coordination point for L-tryptophan. ATP-binding positions include 147-149, Val-186, and 195-199; these read GED and KMSKS. The short motif at 195 to 199 is the 'KMSKS' region element; sequence KMSKS.

Belongs to the class-I aminoacyl-tRNA synthetase family. In terms of assembly, homodimer.

Its subcellular location is the cytoplasm. The catalysed reaction is tRNA(Trp) + L-tryptophan + ATP = L-tryptophyl-tRNA(Trp) + AMP + diphosphate + H(+). Functionally, catalyzes the attachment of tryptophan to tRNA(Trp). Amino acylates tRNA(Trp) with both L- and D-tryptophan, although D-tryptophan is a poor substrate. The protein is Tryptophan--tRNA ligase of Escherichia coli (strain K12).